The chain runs to 395 residues: Protein BUR2 (395 aa).

Disordered stretches follow at residues 1-31 (MSAT…ASSG) and 372-395 (AKQE…KPKI). Ser24 bears the Phosphoserine mark.

In terms of assembly, belongs to the BUR kinase complex composed of SGV1/BUR1 and BUR2. Interacts with SGV1.

Its subcellular location is the nucleus. Its function is as follows. Component of the BUR kinase complex involved in transcription regulation. This complex phosphorylates 'Ser-120' of the UBC2/RAD6 ubiquitin-conjugating enzyme (E2), leading to monoubiquitination of histone H2B, the localization of the PAF1 complex to the chromatin, and the silencing of telomeric-associated genes. Also required for histone H3 'Lys-4' trimethylation. May phosphorylate the 'Ser-5' of the RBP1 carboxy-terminal domain (CTD) repeats. Necessary for the recovery from pheromone-induced growth arrest in the cell cycle G1 phase. Also required for vegetative growth itself. The kinase activity of the complex requires the presence of BUR2. Overexpression of BUR2 interferes with mitotic chromosome segregation. The sequence is that of Protein BUR2 (BUR2) from Saccharomyces cerevisiae (strain ATCC 204508 / S288c) (Baker's yeast).